The chain runs to 148 residues: Mediator of RNA polymerase II transcription subunit 31 (148 aa).

The protein belongs to the Mediator complex subunit 31 family. Component of the Mediator complex.

The protein localises to the nucleus. Functionally, component of the Mediator complex, a coactivator involved in the regulated transcription of nearly all RNA polymerase II-dependent genes. Mediator functions as a bridge to convey information from gene-specific regulatory proteins to the basal RNA polymerase II transcription machinery. Mediator is recruited to promoters by direct interactions with regulatory proteins and serves as a scaffold for the assembly of a functional preinitiation complex with RNA polymerase II and the general transcription factors. The sequence is that of Mediator of RNA polymerase II transcription subunit 31 from Taenia solium (Pork tapeworm).